Consider the following 664-residue polypeptide: Sulfoquinovosidase (664 aa).

3-(6-sulfo-alpha-D-quinovosyl)glycerol-binding residues include Glu135, Glu270, Arg283, Leu284, and Trp286. Catalysis depends on Asp388, which acts as the Nucleophile. The active site involves Glu391. 3-(6-sulfo-alpha-D-quinovosyl)glycerol is bound at residue Arg438. Asp455 acts as the Proton donor in catalysis. His520 contributes to the 3-(6-sulfo-alpha-D-quinovosyl)glycerol binding site.

This sequence belongs to the glycosyl hydrolase 31 family.

It carries out the reaction 3-(6-sulfo-alpha-D-quinovosyl)glycerol + H2O = 6-sulfo-alpha-D-quinovose + glycerol. Functionally, part of the sulfoquinovose monooxygenase (sulfo-SMO) pathway, a D-sulfoquinovose degradation pathway that enables the complete utilization of all carbons within sulfoquinovose (SQ) with concomitant production of inorganic sulfite. Catalyzes the first step of the pathway, the hydrolysis of sulfoquinovosyl glycerol (SQGro) to release sulfoquinovose (SQ). Hydrolyzes both epimers of SQGro, with a preference for the natural 2'R isomer. In vitro, can use the substrate analog para-nitrophenyl alpha-sulfoquinovoside (PNPSQ), but shows no detectable activity toward 4-nitrophenyl alpha-D-glucopyranoside (PNPGlc). This Agrobacterium fabrum (strain C58 / ATCC 33970) (Agrobacterium tumefaciens (strain C58)) protein is Sulfoquinovosidase.